We begin with the raw amino-acid sequence, 1031 residues long: MMS19 nucleotide excision repair protein homolog (1031 aa).

Position 2 is an N-acetylalanine (Ala-2). HEAT repeat units follow at residues 867–905, 909–947, 950–988, and 991–1029; these read QRFF…RLPK, LPEL…EAPQ, SLHV…LPTS, and LPYK…LGSP. Ser-1028 bears the Phosphoserine mark.

The protein belongs to the MET18/MMS19 family. Component of the CIA complex. In the CIA complex, interacts directly with CIAO2B and CIAO3. Component of the MMXD complex, composed of CIAO1, ERCC2, CIAO2B, MMS19 and SLC25A5. Interacts with CIAO2B; the interaction is direct. Interacts with ERCC2/XPD; the interaction is direct. Interacts with ERCC3/XPB and NCOA3/RAC3. Interacts with RTEL1; the interaction mediates the association of RTEL1 with the CIA complex. Interacts with BRIP1. Interacts with KIF4A; the interaction facilitates the transfer of Fe-S clusters to KIF4A to ensure proper localization of KIF4A to the mitotic machinery components. Interacts with CCDC117; the interaction is indirect. Post-translationally, ubiquitinated; undergoes 'Lys-48'-linked polyubiquitination. As to expression, ubiquitously expressed with higher expression in testis.

It localises to the nucleus. The protein localises to the cytoplasm. The protein resides in the cytoskeleton. It is found in the spindle. In terms of biological role, key component of the cytosolic iron-sulfur protein assembly (CIA) complex, a multiprotein complex that mediates the incorporation of iron-sulfur cluster into apoproteins specifically involved in DNA metabolism and genomic integrity. In the CIA complex, MMS19 acts as an adapter between early-acting CIA components and a subset of cellular target Fe/S proteins such as ERCC2/XPD, FANCJ and RTEL1, thereby playing a key role in nucleotide excision repair (NER), homologous recombination-mediated double-strand break DNA repair, DNA replication and RNA polymerase II (POL II) transcription. As a CIA complex component and in collaboration with CIAO1 and CIAO2, binds to and facilitates the assembly of most cytosolic-nuclear Fe/S proteins. As part of the mitotic spindle-associated MMXD complex, plays a role in chromosome segregation, probably by facilitating iron-sulfur cluster assembly into ERCC2/XPD. Together with CIAO2, facilitates the transfer of Fe-S clusters to the motor protein KIF4A, which ensures proper localization of KIF4A to mitotic machinery components to promote the progression of mitosis. Indirectly acts as a transcriptional coactivator of estrogen receptor (ER), via its role in iron-sulfur insertion into some component of the TFIIH-machinery. This Mus musculus (Mouse) protein is MMS19 nucleotide excision repair protein homolog.